A 526-amino-acid chain; its full sequence is ATP synthase subunit alpha (526 aa).

ATP is bound at residue 178-185 (GDRQTGKT).

It belongs to the ATPase alpha/beta chains family. As to quaternary structure, F-type ATPases have 2 components, CF(1) - the catalytic core - and CF(0) - the membrane proton channel. CF(1) has five subunits: alpha(3), beta(3), gamma(1), delta(1), epsilon(1). CF(0) has four main subunits: a(1), b(1), b'(1) and c(9-12).

It localises to the cell membrane. The enzyme catalyses ATP + H2O + 4 H(+)(in) = ADP + phosphate + 5 H(+)(out). Produces ATP from ADP in the presence of a proton gradient across the membrane. The alpha chain is a regulatory subunit. The sequence is that of ATP synthase subunit alpha from Roseiflexus castenholzii (strain DSM 13941 / HLO8).